Reading from the N-terminus, the 286-residue chain is Beta-lactamase SHV-34 (286 aa).

The first 21 residues, 1–21, serve as a signal peptide directing secretion; it reads MRYFRLCIISLLATLPLAVHA. The active-site Acyl-ester intermediate is Ser-66. Residues Cys-73 and Cys-119 are joined by a disulfide bond. The active-site Proton acceptor is Glu-164. Position 230–232 (230–232) interacts with substrate; the sequence is KTG.

It belongs to the class-A beta-lactamase family.

It catalyses the reaction a beta-lactam + H2O = a substituted beta-amino acid. Hydrolyzes ceftazidime and cefotaxime. This is Beta-lactamase SHV-34 (bla) from Escherichia coli.